The sequence spans 228 residues: L-ribulose-5-phosphate 4-epimerase UlaF (228 aa).

Substrate-binding positions include 26-27 (GN), 43-44 (SG), and 72-73 (SS). 3 residues coordinate Zn(2+): Asp-74, His-93, and His-95. The active-site Proton donor/acceptor is the Asp-118. His-167 provides a ligand contact to Zn(2+). Tyr-225 acts as the Proton donor/acceptor in catalysis.

It belongs to the aldolase class II family. AraD/FucA subfamily. The cofactor is Zn(2+).

The catalysed reaction is L-ribulose 5-phosphate = D-xylulose 5-phosphate. It participates in cofactor degradation; L-ascorbate degradation; D-xylulose 5-phosphate from L-ascorbate: step 4/4. Catalyzes the isomerization of L-ribulose 5-phosphate to D-xylulose 5-phosphate. Is involved in the anaerobic L-ascorbate utilization. In Escherichia coli O81 (strain ED1a), this protein is L-ribulose-5-phosphate 4-epimerase UlaF.